Reading from the N-terminus, the 222-residue chain is Glutathione S-transferase alpha-2 (222 aa).

The GST N-terminal domain maps to 3 to 83; the sequence is GKPVLHYFNA…YIATKYDLYG (81 aa). At K4 the chain carries N6-succinyllysine. Glutathione is bound by residues Y9, K45, 54 to 55, and 67 to 68; these read QV and QT. The GST C-terminal domain occupies 85–208; the sequence is DMKERALIDM…QPGSQRKPAM (124 aa).

This sequence belongs to the GST superfamily. Alpha family. Homodimer or heterodimer of GSTA1 and GSTA2.

The protein localises to the cytoplasm. The enzyme catalyses RX + glutathione = an S-substituted glutathione + a halide anion + H(+). Catalyzes the conjugation of glutathione to a large variety of electrophilic compounds. This chain is Glutathione S-transferase alpha-2 (Gsta2), found in Rattus norvegicus (Rat).